The following is a 95-amino-acid chain: Small ribosomal subunit protein bS6 (95 aa).

The protein belongs to the bacterial ribosomal protein bS6 family.

Binds together with bS18 to 16S ribosomal RNA. The protein is Small ribosomal subunit protein bS6 of Clostridium novyi (strain NT).